We begin with the raw amino-acid sequence, 190 residues long: Xanthine phosphoribosyltransferase 1 (190 aa).

L20 and N27 together coordinate xanthine. 128–132 (ANGEA) lines the 5-phospho-alpha-D-ribose 1-diphosphate pocket. K156 provides a ligand contact to xanthine.

The protein belongs to the purine/pyrimidine phosphoribosyltransferase family. Xpt subfamily. Homodimer.

The protein resides in the cytoplasm. It catalyses the reaction XMP + diphosphate = xanthine + 5-phospho-alpha-D-ribose 1-diphosphate. It functions in the pathway purine metabolism; XMP biosynthesis via salvage pathway; XMP from xanthine: step 1/1. Functionally, converts the preformed base xanthine, a product of nucleic acid breakdown, to xanthosine 5'-monophosphate (XMP), so it can be reused for RNA or DNA synthesis. The sequence is that of Xanthine phosphoribosyltransferase 1 from Clostridium botulinum (strain ATCC 19397 / Type A).